Reading from the N-terminus, the 173-residue chain is Shikimate kinase 1 (173 aa).

Position 14-19 (14-19 (GAGKST)) interacts with ATP. Position 18 (S18) interacts with Mg(2+). Residues D36, R60, and G82 each contribute to the substrate site. Position 120 (R120) interacts with ATP. Substrate is bound at residue R140. Position 157 (Q157) interacts with ATP.

It belongs to the shikimate kinase family. As to quaternary structure, monomer. Mg(2+) serves as cofactor.

The protein localises to the cytoplasm. The catalysed reaction is shikimate + ATP = 3-phosphoshikimate + ADP + H(+). It participates in metabolic intermediate biosynthesis; chorismate biosynthesis; chorismate from D-erythrose 4-phosphate and phosphoenolpyruvate: step 5/7. Catalyzes the specific phosphorylation of the 3-hydroxyl group of shikimic acid using ATP as a cosubstrate. The protein is Shikimate kinase 1 of Escherichia fergusonii (strain ATCC 35469 / DSM 13698 / CCUG 18766 / IAM 14443 / JCM 21226 / LMG 7866 / NBRC 102419 / NCTC 12128 / CDC 0568-73).